A 410-amino-acid chain; its full sequence is BTB/POZ and MATH domain-containing protein 5 (410 aa).

The disordered stretch occupies residues 1–24 (MSESVIQGSNPDRVLSPTSSKSVT). Residues 28–162 (NGSHQFVIQG…DDCLIINCTV (135 aa)) enclose the MATH domain. One can recognise a BTB domain in the interval 198-264 (SDITFNIAGE…MYKDSLPEDV (67 aa)).

It belongs to the Tdpoz family. Heterodimer with BPM1 and BPM3. Interacts with RAP2-4. Binds to MYB56 at the promoter of FLOWERING LOCUS T (FT). Ubiquitous.

The protein localises to the nucleus. It is found in the cytoplasm. It functions in the pathway protein modification; protein ubiquitination. May act as a substrate-specific adapter of an E3 ubiquitin-protein ligase complex (CUL3-RBX1-BTB) which mediates the ubiquitination and subsequent proteasomal degradation of target proteins. This Arabidopsis thaliana (Mouse-ear cress) protein is BTB/POZ and MATH domain-containing protein 5 (BPM5).